Here is a 650-residue protein sequence, read N- to C-terminus: Threonine--tRNA ligase (650 aa).

Positions 5 to 67 (NKSMFIKLKD…QEGDQVILWG (63 aa)) constitute a TGS domain. Residues 246 to 537 (DHKLLGAKLD…LIEHYVGKFP (292 aa)) form a catalytic region. The Zn(2+) site is built by C337, H388, and H514.

The protein belongs to the class-II aminoacyl-tRNA synthetase family. Homodimer. The cofactor is Zn(2+).

The protein localises to the cytoplasm. The enzyme catalyses tRNA(Thr) + L-threonine + ATP = L-threonyl-tRNA(Thr) + AMP + diphosphate + H(+). Functionally, catalyzes the attachment of threonine to tRNA(Thr) in a two-step reaction: L-threonine is first activated by ATP to form Thr-AMP and then transferred to the acceptor end of tRNA(Thr). Also edits incorrectly charged L-seryl-tRNA(Thr). In Protochlamydia amoebophila (strain UWE25), this protein is Threonine--tRNA ligase.